The primary structure comprises 299 residues: CMRF35-like molecule 8 (299 aa).

The N-terminal stretch at 1–17 is a signal peptide; the sequence is MWLPWALLLLWVPGCFA. Over 18-180 the chain is Extracellular; it reads LSKCRTVAGP…TEEVVNSQLP (163 aa). Residues 19–123 enclose the Ig-like V-type domain; sequence SKCRTVAGPV…HDPVVEVEVS (105 aa). A disulfide bridge links Cys-36 with Cys-103. N-linked (GlcNAc...) asparagine glycans are attached at residues Asn-83 and Asn-92. Residues 181–201 form a helical membrane-spanning segment; it reads LLLSLLALLLLLLVGASLLAW. Topologically, residues 202–299 are cytoplasmic; sequence RMFQKWIKAG…DSDYSVIRKT (98 aa). Positions 278-299 are disordered; that stretch reads RIAAQRPREEEPDSDYSVIRKT. A Phosphotyrosine modification is found at Tyr-293.

Belongs to the CD300 family. Upon tyrosine-phosphorylation, interacts with PTN6/SHP-1 and PTPN11/SHP-2 and INPP5D. Phosphorylated on tyrosine. Post-translationally, N-glycosylated. As to expression, expressed not only by natural killer (NK) cells but also by T-cell subsets, B-cells, dendritic cells, mast cells, granulocytes and monocytes.

The protein resides in the cell membrane. In terms of biological role, inhibitory receptor which may contribute to the down-regulation of cytolytic activity in natural killer (NK) cells, and to the down-regulation of mast cell degranulation. Negatively regulates the Toll-like receptor (TLR) signaling mediated by MYD88 but not TRIF through activation of PTPN6. The chain is CMRF35-like molecule 8 (CD300A) from Homo sapiens (Human).